The chain runs to 460 residues: ATP synthase subunit beta (460 aa).

Position 150 to 157 (G150 to T157) interacts with ATP.

It belongs to the ATPase alpha/beta chains family. In terms of assembly, F-type ATPases have 2 components, CF(1) - the catalytic core - and CF(0) - the membrane proton channel. CF(1) has five subunits: alpha(3), beta(3), gamma(1), delta(1), epsilon(1). CF(0) has three main subunits: a(1), b(2) and c(9-12). The alpha and beta chains form an alternating ring which encloses part of the gamma chain. CF(1) is attached to CF(0) by a central stalk formed by the gamma and epsilon chains, while a peripheral stalk is formed by the delta and b chains.

It localises to the cell inner membrane. It carries out the reaction ATP + H2O + 4 H(+)(in) = ADP + phosphate + 5 H(+)(out). Produces ATP from ADP in the presence of a proton gradient across the membrane. The catalytic sites are hosted primarily by the beta subunits. This Enterobacter sp. (strain 638) protein is ATP synthase subunit beta.